The chain runs to 167 residues: Peptide deformylase (167 aa).

Fe cation contacts are provided by Cys-91 and His-133. Glu-134 is an active-site residue. His-137 contacts Fe cation.

The protein belongs to the polypeptide deformylase family. Requires Fe(2+) as cofactor.

The catalysed reaction is N-terminal N-formyl-L-methionyl-[peptide] + H2O = N-terminal L-methionyl-[peptide] + formate. Its function is as follows. Removes the formyl group from the N-terminal Met of newly synthesized proteins. Requires at least a dipeptide for an efficient rate of reaction. N-terminal L-methionine is a prerequisite for activity but the enzyme has broad specificity at other positions. The protein is Peptide deformylase of Pseudoalteromonas translucida (strain TAC 125).